We begin with the raw amino-acid sequence, 417 residues long: NADH-quinone oxidoreductase subunit D (417 aa).

Belongs to the complex I 49 kDa subunit family. In terms of assembly, NDH-1 is composed of 14 different subunits. Subunits NuoB, C, D, E, F, and G constitute the peripheral sector of the complex.

The protein localises to the cell inner membrane. The catalysed reaction is a quinone + NADH + 5 H(+)(in) = a quinol + NAD(+) + 4 H(+)(out). NDH-1 shuttles electrons from NADH, via FMN and iron-sulfur (Fe-S) centers, to quinones in the respiratory chain. The immediate electron acceptor for the enzyme in this species is believed to be ubiquinone. Couples the redox reaction to proton translocation (for every two electrons transferred, four hydrogen ions are translocated across the cytoplasmic membrane), and thus conserves the redox energy in a proton gradient. The chain is NADH-quinone oxidoreductase subunit D from Burkholderia mallei (strain NCTC 10247).